The sequence spans 356 residues: Decorin (356 aa).

An N-terminal signal peptide occupies residues 1 to 15 (MRLVLFILLLPVCLA). Positions 16–29 (TPFHQKGLFDFMLE) are excised as a propeptide. O-linked (Xyl...) (glycosaminoglycan) serine glycosylation is present at Ser-45. Cystine bridges form between Cys-51–Cys-57 and Cys-55–Cys-64. LRR repeat units lie at residues 70 to 90 (ERVPKDLPPDTTLLDLQNNKI), 91 to 114 (TEIRDGDFKNLKNLHALILVNNKI), 115 to 138 (SKISPQAFAPLKKLERLYLSKNNL), 139 to 159 (KELPENMPKSLQEIRAHENEI), 160 to 183 (SKLRKAVFNGLNQVIVLELGTNPL), 184 to 209 (KSSGIENGAFQGMKRLSYIRIADTNI), 210 to 230 (TSIPKGLPPSLTELHLDGNKI), 231 to 254 (SKIDAEGLSGLTNLAKLGLSFNSI), 255 to 278 (SSVENGSLNNVPHLRELHLNNNEL), 279 to 301 (VRVPSGLGEHKYIQVVYLHNNKI), 302 to 331 (ASIGINDFCPLGYNTKKATYSGVSLFSNPV), and 332 to 356 (QYWEIQPSAFRCIHERSAVQIGNYK). Asn-208 is a glycosylation site (N-linked (GlcNAc...) asparagine). Asn-259 is a glycosylation site (N-linked (GlcNAc...) asparagine). Cys-310 and Cys-343 form a disulfide bridge.

Belongs to the small leucine-rich proteoglycan (SLRP) family. SLRP class I subfamily. In terms of assembly, binds to type I and type II collagen, to fibronectin and TGF-beta. Forms a ternary complex with MFAP2 and ELN. The attached glycosaminoglycan chain can be either chondroitin sulfate or dermatan sulfate depending upon the tissue of origin.

It localises to the secreted. Its subcellular location is the extracellular space. It is found in the extracellular matrix. May affect the rate of fibrils formation. This Coturnix japonica (Japanese quail) protein is Decorin (DCN).